A 422-amino-acid chain; its full sequence is Adenylosuccinate synthetase (422 aa).

Residues 12–18 (GDEGKGK) and 40–42 (GHT) each bind GTP. Asp-13 acts as the Proton acceptor in catalysis. 2 residues coordinate Mg(2+): Asp-13 and Gly-40. IMP-binding positions include 13-16 (DEGK), 38-41 (NAGH), Thr-129, Arg-143, Asn-221, Thr-236, and Arg-300. His-41 (proton donor) is an active-site residue. A substrate-binding site is contributed by 296-302 (VTTGRKR). Residues Arg-302, 328–330 (KLD), and 410–412 (GVG) each bind GTP.

This sequence belongs to the adenylosuccinate synthetase family. As to quaternary structure, homodimer. Mg(2+) serves as cofactor.

It localises to the cytoplasm. The enzyme catalyses IMP + L-aspartate + GTP = N(6)-(1,2-dicarboxyethyl)-AMP + GDP + phosphate + 2 H(+). It functions in the pathway purine metabolism; AMP biosynthesis via de novo pathway; AMP from IMP: step 1/2. Functionally, plays an important role in the de novo pathway and in the salvage pathway of purine nucleotide biosynthesis. Catalyzes the first committed step in the biosynthesis of AMP from IMP. In Pyrenophora tritici-repentis (strain Pt-1C-BFP) (Wheat tan spot fungus), this protein is Adenylosuccinate synthetase.